The sequence spans 476 residues: Cysteine--tRNA ligase (476 aa).

Residue Cys-28 coordinates Zn(2+). The 'HIGH' region motif lies at 30 to 40 (VTTYDFCHIGH). Positions 215, 241, and 245 each coordinate Zn(2+). The short motif at 273–277 (KMSKS) is the 'KMSKS' region element. Lys-276 is a binding site for ATP.

This sequence belongs to the class-I aminoacyl-tRNA synthetase family. Monomer. Zn(2+) serves as cofactor.

The protein resides in the cytoplasm. The enzyme catalyses tRNA(Cys) + L-cysteine + ATP = L-cysteinyl-tRNA(Cys) + AMP + diphosphate. The protein is Cysteine--tRNA ligase of Buchnera aphidicola subsp. Cinara cedri (strain Cc).